We begin with the raw amino-acid sequence, 424 residues long: Bone morphogenetic protein 10 (424 aa).

A signal peptide spans 1 to 21; it reads MGSLVLTLCALFCLAAYLVSG. Positions 22–316 are excised as a propeptide; it reads SPIMNLEQSP…IYDSTARIRR (295 aa). Residues Asn-67 and Asn-131 are each glycosylated (N-linked (GlcNAc...) asparagine). 3 disulfides stabilise this stretch: Cys-323–Cys-389, Cys-352–Cys-421, and Cys-356–Cys-423.

Belongs to the TGF-beta family. Homodimer; disulfide-linked. Interacts with FBN1 (via N-terminal domain) and FBN2. Interacts with ENG. As to expression, detected in mammary epithelia (at protein level).

The protein localises to the secreted. Its function is as follows. Required for maintaining the proliferative activity of embryonic cardiomyocytes by preventing premature activation of the negative cell cycle regulator CDKN1C/p57KIP and maintaining the required expression levels of cardiogenic factors such as MEF2C and NKX2-5. Acts as a ligand for ACVRL1/ALK1, BMPR1A/ALK3 and BMPR1B/ALK6, leading to activation of SMAD1, SMAD5 and SMAD8 transcription factors. Inhibits endothelial cell migration and growth. May reduce cell migration and cell matrix adhesion in breast cancer cell lines. The polypeptide is Bone morphogenetic protein 10 (BMP10) (Homo sapiens (Human)).